The primary structure comprises 91 residues: Large ribosomal subunit protein eL43 (91 aa).

The C4-type zinc-finger motif lies at 39–60; the sequence is CPFCGKDAMRRGAVGIWNCSKC.

It belongs to the eukaryotic ribosomal protein eL43 family.

This is Large ribosomal subunit protein eL43 (rpl-37a) from Ostertagia ostertagi (Brown stomach worm).